A 142-amino-acid polypeptide reads, in one-letter code: Large ribosomal subunit protein uL11 (142 aa).

The protein belongs to the universal ribosomal protein uL11 family. In terms of assembly, part of the ribosomal stalk of the 50S ribosomal subunit. Interacts with L10 and the large rRNA to form the base of the stalk. L10 forms an elongated spine to which L12 dimers bind in a sequential fashion forming a multimeric L10(L12)X complex. One or more lysine residues are methylated.

Functionally, forms part of the ribosomal stalk which helps the ribosome interact with GTP-bound translation factors. The sequence is that of Large ribosomal subunit protein uL11 from Acinetobacter baumannii (strain AB307-0294).